The chain runs to 718 residues: Heat shock 70 kDa protein 6, chloroplastic (718 aa).

The N-terminal 92 residues, 1 to 92 (MASSAAQIHV…IDLGTTNSAV (92 aa)), are a transit peptide targeting the chloroplast. The interval 671 to 718 (QSLYNQPGAGGPGAGPSPGGEGASSGDSSSSKGGDGDDVIDADFTDSQ) is disordered. Residues 678–693 (GAGGPGAGPSPGGEGA) show a composition bias toward gly residues. Positions 706 to 718 (GDDVIDADFTDSQ) are enriched in acidic residues.

Belongs to the heat shock protein 70 (TC 1.A.33) family. DnaK subfamily. In terms of assembly, interacts with geminivirus movement protein (MP).

It localises to the plastid. It is found in the chloroplast stroma. In terms of biological role, acts redundantly with HSP70-7 in the thermotolerance of germinating seeds. Plays an important role in the protein precursor import into chloroplasts. Its function is as follows. In cooperation with other chaperones, Hsp70s are key components that facilitate folding of de novo synthesized proteins, assist translocation of precursor proteins into organelles, and are responsible for degradation of damaged protein under stress conditions. The polypeptide is Heat shock 70 kDa protein 6, chloroplastic (HSP70-6) (Arabidopsis thaliana (Mouse-ear cress)).